Consider the following 282-residue polypeptide: DegV domain-containing protein M6_Spy0690 (282 aa).

A DegV domain is found at 3–280 (LAVITDSTAT…EGAIAFGVTP (278 aa)). The hexadecanoate site is built by threonine 61 and serine 94.

May bind long-chain fatty acids, such as palmitate, and may play a role in lipid transport or fatty acid metabolism. In Streptococcus pyogenes serotype M6 (strain ATCC BAA-946 / MGAS10394), this protein is DegV domain-containing protein M6_Spy0690.